The primary structure comprises 245 residues: Polyhedrin (245 aa).

It belongs to the polyhedrin family.

Its function is as follows. Major component of the virus occlusion bodies, which are large proteinaceous structures (polyhedra), that protect the virus from the outside environment for extended periods until they are ingested by insect larvae. This chain is Polyhedrin (PH), found in Bombyx mori nuclear polyhedrosis virus (BmNPV).